The chain runs to 431 residues: Protein farnesyltransferase subunit beta (431 aa).

PFTB repeat units follow at residues 130–171, 182–224, 231–273, 280–322, and 332–375; these read KRKI…SLCD, RKGI…TLLN, TEGV…AILR, VEKL…AILE, and KHAL…AVAE. (2E,6E)-farnesyl diphosphate contacts are provided by residues 258–261 and 301–304; these read HGGY and RSNK. Positions 307 and 309 each coordinate Zn(2+). 310-313 is a (2E,6E)-farnesyl diphosphate binding site; the sequence is YSFW. Residue His-363 participates in Zn(2+) binding.

The protein belongs to the protein prenyltransferase subunit beta family. In terms of assembly, heterodimer of an alpha (RAM2) and a beta (RAM1) subunit. Zn(2+) is required as a cofactor.

The protein localises to the cytoplasm. It catalyses the reaction L-cysteinyl-[protein] + (2E,6E)-farnesyl diphosphate = S-(2E,6E)-farnesyl-L-cysteinyl-[protein] + diphosphate. In terms of biological role, catalyzes the transfer of a farnesyl moiety from farnesyl diphosphate to a cysteine at the fourth position from the C-terminus of several proteins having the C-terminal sequence Cys-aliphatic-aliphatic-X where X is Ser, Ala, Met, Cys, or Gln. Required for the membrane localization of proteins such as a-factor, Ras proteins and other membrane proteins containing the C-terminal CAAX motif. The beta subunit is responsible for isoprenoid and peptide-binding. In Saccharomyces cerevisiae (strain ATCC 204508 / S288c) (Baker's yeast), this protein is Protein farnesyltransferase subunit beta.